The chain runs to 126 residues: Large ribosomal subunit protein uL24 (126 aa).

The disordered stretch occupies residues 1–23 (MKFSRDVTSSRRKQRKAHFGAPS).

It belongs to the universal ribosomal protein uL24 family. In terms of assembly, component of the large ribosomal subunit (LSU). Mature yeast ribosomes consist of a small (40S) and a large (60S) subunit. The 40S small subunit contains 1 molecule of ribosomal RNA (18S rRNA) and at least 33 different proteins. The large 60S subunit contains 3 rRNA molecules (25S, 5.8S and 5S rRNA) and at least 46 different proteins.

The protein resides in the cytoplasm. It is found in the nucleus. Its subcellular location is the nucleolus. Its function is as follows. Component of the ribosome, a large ribonucleoprotein complex responsible for the synthesis of proteins in the cell. The small ribosomal subunit (SSU) binds messenger RNAs (mRNAs) and translates the encoded message by selecting cognate aminoacyl-transfer RNA (tRNA) molecules. The large subunit (LSU) contains the ribosomal catalytic site termed the peptidyl transferase center (PTC), which catalyzes the formation of peptide bonds, thereby polymerizing the amino acids delivered by tRNAs into a polypeptide chain. The nascent polypeptides leave the ribosome through a tunnel in the LSU and interact with protein factors that function in enzymatic processing, targeting, and the membrane insertion of nascent chains at the exit of the ribosomal tunnel. This chain is Large ribosomal subunit protein uL24 (rpl26), found in Schizosaccharomyces pombe (strain 972 / ATCC 24843) (Fission yeast).